The sequence spans 411 residues: MRGIIKRLNDDGFGILYNKILVPFSAPGDEVEVLKTEKQKRAKIATEWRLLRSSPIRVGARCKVFGKCGGCILQHINYNSQLEFKKEKLRKILGREVEIIPSPRIFGHRNRIDLAVTVNAIGFREKGKWWSVVDVEECPVFGKTSKKAIERLREYIEEEKVSTWKIREDSGFLRYMVLREGKFTGEIMVNFVTKEGELPDPTSYFDFADSIYWSINRSKSDVSYGDIEKYWGKEFIMEELDGVKYLIHPNSFFQTNSYQAVNLVKTVEKFVEGEKVVDMYSGVGTFGVYLAKKGMKVVGFDSNAFAIEMANKNAEINNVEAEFFVASDREVDIKGFDTVIVDPPRAGLHPKLVKRLNDHGPETIVYVSCNPKTFKVNIEQLNNYIIEELIALDMFPHTPHIELVGKLRRLV.

[4Fe-4S] cluster is bound by residues Cys-62, Cys-68, Cys-71, and Cys-138. S-adenosyl-L-methionine is bound by residues Gln-254, Tyr-280, Thr-285, 301 to 302, Asp-328, and Asp-342; that span reads DS. Residue Cys-369 is the Nucleophile of the active site. The Proton acceptor role is filled by Glu-402.

Belongs to the class I-like SAM-binding methyltransferase superfamily. RNA M5U methyltransferase family.

It carries out the reaction uridine(54) in tRNA + S-adenosyl-L-methionine = 5-methyluridine(54) in tRNA + S-adenosyl-L-homocysteine + H(+). In terms of biological role, catalyzes the formation of 5-methyl-uridine at position 54 (m5U54) in tRNA. This Pyrococcus furiosus (strain ATCC 43587 / DSM 3638 / JCM 8422 / Vc1) protein is tRNA (uracil(54)-C(5))-methyltransferase.